The primary structure comprises 132 residues: Small ribosomal subunit protein uS8 (132 aa).

The protein belongs to the universal ribosomal protein uS8 family. In terms of assembly, part of the 30S ribosomal subunit. Contacts proteins S5 and S12.

One of the primary rRNA binding proteins, it binds directly to 16S rRNA central domain where it helps coordinate assembly of the platform of the 30S subunit. This is Small ribosomal subunit protein uS8 from Staphylococcus aureus (strain USA300).